The following is a 334-amino-acid chain: Glycerol-1-phosphate dehydrogenase [NAD(P)+] (334 aa).

Residues 77-81 (GRPID) and 99-102 (TTAS) contribute to the NAD(+) site. D104 contacts substrate. Position 108 (S108) interacts with NAD(+). D147 lines the substrate pocket. The Zn(2+) site is built by D147 and H225. Residue H229 coordinates substrate. H246 is a binding site for Zn(2+).

The protein belongs to the glycerol-1-phosphate dehydrogenase family. The cofactor is Zn(2+).

It localises to the cytoplasm. It carries out the reaction sn-glycerol 1-phosphate + NAD(+) = dihydroxyacetone phosphate + NADH + H(+). The enzyme catalyses sn-glycerol 1-phosphate + NADP(+) = dihydroxyacetone phosphate + NADPH + H(+). It functions in the pathway membrane lipid metabolism; glycerophospholipid metabolism. In terms of biological role, catalyzes the NAD(P)H-dependent reduction of dihydroxyacetonephosphate (DHAP or glycerone phosphate) to glycerol 1-phosphate (G1P). The G1P thus generated is used as the glycerophosphate backbone of phospholipids in the cellular membranes of Archaea. The chain is Glycerol-1-phosphate dehydrogenase [NAD(P)+] from Methanococcus maripaludis (strain DSM 14266 / JCM 13030 / NBRC 101832 / S2 / LL).